We begin with the raw amino-acid sequence, 285 residues long: Steroidogenic acute regulatory protein, mitochondrial (285 aa).

Residues 1–63 constitute a mitochondrion transit peptide; the sequence is MLLATFKLCA…RRSSLLGSRL (63 aa). 2 positions are modified to phosphoserine; by PKA: serine 57 and serine 195. An START domain is found at 67 to 280; that stretch reads LYSDQELAYL…LRKRLESHPA (214 aa).

In terms of assembly, may interact with TSPO. In terms of tissue distribution, expressed in gonads, adrenal cortex and kidney.

The protein resides in the mitochondrion. The catalysed reaction is cholesterol(in) = cholesterol(out). Its pathway is steroid metabolism; cholesterol metabolism. Functionally, plays a key role in steroid hormone synthesis by enhancing the metabolism of cholesterol into pregnenolone. Mediates the transfer of cholesterol from the outer mitochondrial membrane to the inner mitochondrial membrane where it is cleaved to pregnenolone. This chain is Steroidogenic acute regulatory protein, mitochondrial (STAR), found in Homo sapiens (Human).